The chain runs to 274 residues: Large ribosomal subunit protein uL2 (274 aa).

The tract at residues 223–274 is disordered; the sequence is VVMNPVDHPHGGGEGRTSGGRHPVSPWGVPTKGYKTRSNKRTDKYIVRRRNK.

Belongs to the universal ribosomal protein uL2 family. In terms of assembly, part of the 50S ribosomal subunit. Forms a bridge to the 30S subunit in the 70S ribosome.

In terms of biological role, one of the primary rRNA binding proteins. Required for association of the 30S and 50S subunits to form the 70S ribosome, for tRNA binding and peptide bond formation. It has been suggested to have peptidyltransferase activity; this is somewhat controversial. Makes several contacts with the 16S rRNA in the 70S ribosome. This Vibrio cholerae serotype O1 (strain M66-2) protein is Large ribosomal subunit protein uL2.